Reading from the N-terminus, the 363-residue chain is Chorismate synthase (363 aa).

R48 contacts NADP(+). FMN contacts are provided by residues 125-127 (RSS), 238-239 (NA), G278, 293-297 (KPTAS), and R319.

It belongs to the chorismate synthase family. In terms of assembly, homotetramer. The cofactor is FMNH2.

It carries out the reaction 5-O-(1-carboxyvinyl)-3-phosphoshikimate = chorismate + phosphate. It functions in the pathway metabolic intermediate biosynthesis; chorismate biosynthesis; chorismate from D-erythrose 4-phosphate and phosphoenolpyruvate: step 7/7. Catalyzes the anti-1,4-elimination of the C-3 phosphate and the C-6 proR hydrogen from 5-enolpyruvylshikimate-3-phosphate (EPSP) to yield chorismate, which is the branch point compound that serves as the starting substrate for the three terminal pathways of aromatic amino acid biosynthesis. This reaction introduces a second double bond into the aromatic ring system. The chain is Chorismate synthase from Acinetobacter baumannii (strain SDF).